The primary structure comprises 255 residues: Aliphatic sulfonates import ATP-binding protein SsuB (255 aa).

The ABC transporter domain occupies 12–233 (LLLNAVSKHY…RLGSVRLAEL (222 aa)). 44–51 (GRSGGGKS) serves as a coordination point for ATP.

This sequence belongs to the ABC transporter superfamily. Aliphatic sulfonates importer (TC 3.A.1.17.2) family. In terms of assembly, the complex is composed of two ATP-binding proteins (SsuB), two transmembrane proteins (SsuC) and a solute-binding protein (SsuA).

It is found in the cell inner membrane. The enzyme catalyses ATP + H2O + aliphatic sulfonate-[sulfonate-binding protein]Side 1 = ADP + phosphate + aliphatic sulfonateSide 2 + [sulfonate-binding protein]Side 1.. Its function is as follows. Part of the ABC transporter complex SsuABC involved in aliphatic sulfonates import. Responsible for energy coupling to the transport system. This Escherichia coli O1:K1 / APEC protein is Aliphatic sulfonates import ATP-binding protein SsuB.